The primary structure comprises 457 residues: tRNA-2-methylthio-N(6)-dimethylallyladenosine synthase (457 aa).

Positions 3–120 constitute an MTTase N-terminal domain; it reads KKVYVKTFGC…LPQMIDARRE (118 aa). Residues C12, C49, C83, C157, C161, and C164 each contribute to the [4Fe-4S] cluster site. The 235-residue stretch at 143 to 377 folds into the Radical SAM core domain; the sequence is RVEGPSAFVS…QATIEENVAR (235 aa). The TRAM domain occupies 380–447; that stretch reads QSMVGKVERI…PHSLRGELVL (68 aa).

The protein belongs to the methylthiotransferase family. MiaB subfamily. In terms of assembly, monomer. The cofactor is [4Fe-4S] cluster.

It localises to the cytoplasm. It carries out the reaction N(6)-dimethylallyladenosine(37) in tRNA + (sulfur carrier)-SH + AH2 + 2 S-adenosyl-L-methionine = 2-methylsulfanyl-N(6)-dimethylallyladenosine(37) in tRNA + (sulfur carrier)-H + 5'-deoxyadenosine + L-methionine + A + S-adenosyl-L-homocysteine + 2 H(+). Functionally, catalyzes the methylthiolation of N6-(dimethylallyl)adenosine (i(6)A), leading to the formation of 2-methylthio-N6-(dimethylallyl)adenosine (ms(2)i(6)A) at position 37 in tRNAs that read codons beginning with uridine. In Burkholderia lata (strain ATCC 17760 / DSM 23089 / LMG 22485 / NCIMB 9086 / R18194 / 383), this protein is tRNA-2-methylthio-N(6)-dimethylallyladenosine synthase.